A 248-amino-acid chain; its full sequence is Transcription factor MYB1 (248 aa).

2 HTH myb-type domains span residues 9–61 and 62–116; these read KEGM…LNYL and RPGI…GRRV. 2 DNA-binding regions (H-T-H motif) span residues 37 to 61 and 89 to 112; these read WRSL…LNYL and WSLI…NTNL. Residues 118 to 144 form a disordered region; the sequence is DQSHQHCRPNPTITSTKPADAPPANAN.

The protein resides in the nucleus. Transcription activator involved in the spatiotemporal regulation of flavonoid biosynthesis specifically in the corms of Montbretia. Activates the promoters of enzymes involved in the biosynthesis of the flavonol kaempferol and the flavonol-glycoside kaempferol-rhamnoside. This Crocosmia x crocosmiiflora (Montbretia) protein is Transcription factor MYB1.